The primary structure comprises 131 residues: GFLGGGYGGGLGLGGYGGGYGLGGGLGGGLGAIGLAAAPAVGIAAAPAIGIAAAPATLVRTRVVPGPARLVQPPPVVQKQVIQPPPIVQTRLIEPPAQLVQGPPQVIHEQTPALIKTAVPAPSFGYKSLLH.

Tandem repeats lie at residues 37–40 (AAPA), 45–48 (AAPA), and 53–56 (AAPA).

Component of the cuticle of migratory locust which contains more than 100 different structural proteins. In Locusta migratoria (Migratory locust), this protein is Cuticle protein 79, isoform B.